The chain runs to 716 residues: Ubiquitin thioesterase zranb1-B (716 aa).

2 consecutive RanBP2-type zinc fingers follow at residues 3-33 (DLGL…QRHN) and 82-111 (TSSK…QRQQ). Residues Cys10, Cys13, Cys24, Cys27, Cys88, Cys91, Cys102, and Cys105 each contribute to the Zn(2+) site. The segment at 113–143 (SQQHSPLSPSETPQTSGSRPSPVTSDPCEEY) is disordered. The span at 118 to 136 (PLSPSETPQTSGSRPSPVT) shows a compositional bias: polar residues. Residues 152 to 181 (HAQRWPCSACTYENWPKSLRCVVCDHPKPS) form a RanBP2-type 3 zinc finger. Positions 158, 161, 172, and 175 each coordinate Zn(2+). A disordered region spans residues 178–228 (PKPSGSPETPQQDSEAESATSPSIVNEQERENVRTAGGGGGGSRGRLRKLS). The segment covering 183-203 (SPETPQQDSEAESATSPSIVN) has biased composition (polar residues). ANK repeat units lie at residues 268–298 (RRSD…SGGD) and 321–348 (FTLV…QQTA). The OTU domain occupies 440–600 (LYALWNRTAG…RGHFSALVAM (161 aa)). Cys451 serves as the catalytic Nucleophile. His593 acts as the Proton acceptor in catalysis.

The protein belongs to the peptidase C64 family.

The protein resides in the cytoplasm. It is found in the nucleus. The enzyme catalyses Thiol-dependent hydrolysis of ester, thioester, amide, peptide and isopeptide bonds formed by the C-terminal Gly of ubiquitin (a 76-residue protein attached to proteins as an intracellular targeting signal).. Its function is as follows. Ubiquitin thioesterase, which specifically hydrolyzes 'Lys-29'-linked and 'Lys-33'-linked diubiquitin. Also cleaves 'Lys-63'-linked chains, but with 40-fold less efficiency compared to 'Lys-29'-linked ones. Positive regulator of the Wnt signaling pathway that deubiquitinates apc protein, a negative regulator of Wnt-mediated transcription. Acts as a regulator of autophagy by mediating deubiquitination of pik3c3/vps34, thereby promoting autophagosome maturation. Plays a role in the regulation of cell morphology and cytoskeletal organization. Required in the stress fiber dynamics and cell migration. The chain is Ubiquitin thioesterase zranb1-B (zranb1b) from Danio rerio (Zebrafish).